The chain runs to 597 residues: UvrABC system protein C (597 aa).

The GIY-YIG domain maps to 15 to 93; that stretch reads DNPGVYQYYD…IKTLQPRYNV (79 aa). Residues 207–242 form the UVR domain; it reads KESLKDFKKLMNNYAQNLQFEEAQKIKEKIEVLENY.

This sequence belongs to the UvrC family. Interacts with UvrB in an incision complex.

Its subcellular location is the cytoplasm. Its function is as follows. The UvrABC repair system catalyzes the recognition and processing of DNA lesions. UvrC both incises the 5' and 3' sides of the lesion. The N-terminal half is responsible for the 3' incision and the C-terminal half is responsible for the 5' incision. This chain is UvrABC system protein C, found in Flavobacterium johnsoniae (strain ATCC 17061 / DSM 2064 / JCM 8514 / BCRC 14874 / CCUG 350202 / NBRC 14942 / NCIMB 11054 / UW101) (Cytophaga johnsonae).